We begin with the raw amino-acid sequence, 502 residues long: Maturase K (502 aa).

Belongs to the intron maturase 2 family. MatK subfamily.

The protein localises to the plastid. Its subcellular location is the chloroplast. Functionally, usually encoded in the trnK tRNA gene intron. Probably assists in splicing its own and other chloroplast group II introns. The sequence is that of Maturase K from Vitis vinifera (Grape).